Consider the following 388-residue polypeptide: LL-diaminopimelate aminotransferase (388 aa).

Substrate contacts are provided by Tyr13, Gly38, Lys102, Tyr126, and Asn176. Residues 101–102, Tyr126, Asn176, Tyr207, and 235–237 each bind pyridoxal 5'-phosphate; these read SK and SLS. Lys238 carries the N6-(pyridoxal phosphate)lysine modification. Arg246 provides a ligand contact to pyridoxal 5'-phosphate. Arg364 contacts substrate.

Belongs to the class-I pyridoxal-phosphate-dependent aminotransferase family. LL-diaminopimelate aminotransferase subfamily. Homodimer. The cofactor is pyridoxal 5'-phosphate.

It catalyses the reaction (2S,6S)-2,6-diaminopimelate + 2-oxoglutarate = (S)-2,3,4,5-tetrahydrodipicolinate + L-glutamate + H2O + H(+). The protein operates within amino-acid biosynthesis; L-lysine biosynthesis via DAP pathway; LL-2,6-diaminopimelate from (S)-tetrahydrodipicolinate (aminotransferase route): step 1/1. Functionally, involved in the synthesis of meso-diaminopimelate (m-DAP or DL-DAP), required for both lysine and peptidoglycan biosynthesis. Catalyzes the direct conversion of tetrahydrodipicolinate to LL-diaminopimelate. The polypeptide is LL-diaminopimelate aminotransferase (Dehalococcoides mccartyi (strain CBDB1)).